Reading from the N-terminus, the 414-residue chain is V-set and immunoglobulin domain-containing protein 8 (414 aa).

An N-terminal signal peptide occupies residues 1 to 21; it reads MRVGGAFHLLLVCLSPALLSA. Ig-like V-type domains are found at residues 22–141 and 146–257; these read VRIN…VIVT and PAVP…VKVS. Over 22–263 the chain is Extracellular; the sequence is VRINGDGQEV…VKVSDSRRIG (242 aa). 2 disulfides stabilise this stretch: C44–C126 and C167–C239. The helical transmembrane segment at 264 to 284 threads the bilayer; it reads VIIGIVLGSLLALGCLAVGIW. The Cytoplasmic portion of the chain corresponds to 285 to 414; that stretch reads GLVCCCCGGS…PVQCKNGLLV (130 aa).

The protein resides in the membrane. The polypeptide is V-set and immunoglobulin domain-containing protein 8 (Homo sapiens (Human)).